The sequence spans 276 residues: Large ribosomal subunit protein uL2 (276 aa).

The segment at 224–265 (VMNPVDHPHGGGEGRTASGRHPVSPWGLPTKGYKTRNNKRTD) is disordered.

This sequence belongs to the universal ribosomal protein uL2 family. Part of the 50S ribosomal subunit. Forms a bridge to the 30S subunit in the 70S ribosome.

In terms of biological role, one of the primary rRNA binding proteins. Required for association of the 30S and 50S subunits to form the 70S ribosome, for tRNA binding and peptide bond formation. It has been suggested to have peptidyltransferase activity; this is somewhat controversial. Makes several contacts with the 16S rRNA in the 70S ribosome. This is Large ribosomal subunit protein uL2 from Dichelobacter nodosus (strain VCS1703A).